The following is a 421-amino-acid chain: Solute carrier family 35 member F3 (421 aa).

Residues 25 to 53 (EGEERPREPPGPAEAQAPAGTEAGGRTSR) form a disordered region. The span at 37 to 49 (AEAQAPAGTEAGG) shows a compositional bias: low complexity. The next 10 membrane-spanning stretches (helical) occupy residues 66–86 (VFWGVAVVFCVCASWAGSTQL), 98–118 (FTLTWFATNWNFLFFPLYYAG), 149–169 (VFFTKAAPFGVLWTLTNYLYL), 179–199 (DVSVLFCCNKSFVFLLSWIVL), 208–228 (IVAAILAIAGIVMMTYADGFH), 232–252 (VIGIALVVGSASMSALYKVLF), 266–286 (LFLSILGVFNILFITCIPVIL), 305–325 (LCGFSILLLTFNIVLNFGIAV), 326–346 (TYPTLMSLGIVLSVPVNAVVD), and 352–372 (IVFNGVRVIAIIIIGLGFLLL). The disordered stretch occupies residues 394 to 421 (KEETAESSGDLGTGPQSRSRRARPSFAR). Residues 411-421 (RSRRARPSFAR) are compositionally biased toward basic residues.

This sequence belongs to the SLC35F solute transporter family.

Its subcellular location is the membrane. The enzyme catalyses thiamine(in) = thiamine(out). Functionally, mediates thiamine transport. In Mus musculus (Mouse), this protein is Solute carrier family 35 member F3 (Slc35f3).